Reading from the N-terminus, the 84-residue chain is Small ribosomal subunit protein uS17 (84 aa).

It belongs to the universal ribosomal protein uS17 family. As to quaternary structure, part of the 30S ribosomal subunit.

One of the primary rRNA binding proteins, it binds specifically to the 5'-end of 16S ribosomal RNA. This is Small ribosomal subunit protein uS17 from Clostridium novyi (strain NT).